Reading from the N-terminus, the 344-residue chain is MSNAITMGIFWHLIGAASAACFYAPFKKVKKWSWETMWSVGGIVSWIILPWAISALLLPNFWAYYSSFSLSTLLPVFLFGAMWGIGNINYGLTMRYLGMSMGIGIAIGITLIVGTLMTPIINGNFDVLISTEGGRMTLLGVLVALIGVGIVTRAGQLKERKMGIKAEEFNLKKGLVLAVMCGIFSAGMSFAMNAAKPMHEAAAALGVDPLYVALPSYVVIMGGGAIINLGFCFIRLAKVKDLSLKADFSLAKSLIIHNVLLSTLGGLMWYLQFFFYAWGHAPIPAQYDYISWMLHMSFYVLCGGIVGLVLKEWNNAGRRPVTVLSLGCVVIIVAANIVGIGMAN.

10 helical membrane passes run 4–24 (AITMGIFWHLIGAASAACFYA), 38–58 (WSVGGIVSWIILPWAISALLL), 68–88 (FSLSTLLPVFLFGAMWGIGNI), 101–121 (MGIGIAIGITLIVGTLMTPII), 137–157 (TLLGVLVALIGVGIVTRAGQL), 175–195 (LVLAVMCGIFSAGMSFAMNAA), 214–234 (LPSYVVIMGGGAIINLGFCFI), 259–279 (VLLSTLGGLMWYLQFFFYAWG), 290–310 (ISWMLHMSFYVLCGGIVGLVL), and 323–343 (VLSLGCVVIIVAANIVGIGMA).

This sequence belongs to the L-rhamnose transporter (TC 2.A.7.6) family.

Its subcellular location is the cell inner membrane. It carries out the reaction L-rhamnopyranose(in) + H(+)(in) = L-rhamnopyranose(out) + H(+)(out). Functionally, uptake of L-rhamnose across the cytoplasmic membrane with the concomitant transport of protons into the cell (symport system). In Escherichia coli (strain ATCC 8739 / DSM 1576 / NBRC 3972 / NCIMB 8545 / WDCM 00012 / Crooks), this protein is L-rhamnose-proton symporter.